The chain runs to 63 residues: Large ribosomal subunit protein bL32 (63 aa).

It belongs to the bacterial ribosomal protein bL32 family.

The chain is Large ribosomal subunit protein bL32 from Lactobacillus delbrueckii subsp. bulgaricus (strain ATCC 11842 / DSM 20081 / BCRC 10696 / JCM 1002 / NBRC 13953 / NCIMB 11778 / NCTC 12712 / WDCM 00102 / Lb 14).